The primary structure comprises 643 residues: tRNA 5-methylaminomethyl-2-thiouridine biosynthesis bifunctional protein MnmC (643 aa).

Residues 1–223 form a tRNA (mnm(5)s(2)U34)-methyltransferase region; sequence MPDRLVSATL…VDDRLVGDYA (223 aa). Positions 247 to 643 are FAD-dependent cmnm(5)s(2)U34 oxidoreductase; that stretch reads IGAGLAGCAV…LRARRVGSAG (397 aa).

In the N-terminal section; belongs to the methyltransferase superfamily. tRNA (mnm(5)s(2)U34)-methyltransferase family. It in the C-terminal section; belongs to the DAO family. FAD is required as a cofactor.

Its subcellular location is the cytoplasm. The catalysed reaction is 5-aminomethyl-2-thiouridine(34) in tRNA + S-adenosyl-L-methionine = 5-methylaminomethyl-2-thiouridine(34) in tRNA + S-adenosyl-L-homocysteine + H(+). Functionally, catalyzes the last two steps in the biosynthesis of 5-methylaminomethyl-2-thiouridine (mnm(5)s(2)U) at the wobble position (U34) in tRNA. Catalyzes the FAD-dependent demodification of cmnm(5)s(2)U34 to nm(5)s(2)U34, followed by the transfer of a methyl group from S-adenosyl-L-methionine to nm(5)s(2)U34, to form mnm(5)s(2)U34. This is tRNA 5-methylaminomethyl-2-thiouridine biosynthesis bifunctional protein MnmC from Burkholderia orbicola (strain AU 1054).